We begin with the raw amino-acid sequence, 239 residues long: UPF0126 membrane protein VC_2382 (239 aa).

Helical transmembrane passes span 38–58 (LLYL…VLLA), 62–82 (KMDP…GGTI), 86–106 (ALGA…VIMI), 122–142 (AWWI…GIGV), 153–173 (LIAI…RDVL), and 185–205 (VYAT…AMGY).

This sequence belongs to the UPF0126 family.

Its subcellular location is the cell membrane. The chain is UPF0126 membrane protein VC_2382 from Vibrio cholerae serotype O1 (strain ATCC 39315 / El Tor Inaba N16961).